A 344-amino-acid polypeptide reads, in one-letter code: Beta-1,4-galactosyltransferase 4 (344 aa).

The Cytoplasmic segment spans residues 1 to 12; sequence MGFNLTFHLSYK. Residues 13–38 traverse the membrane as a helical; Signal-anchor for type II membrane protein segment; it reads FRLLLLLTLCLTVVGWATSNYFVGAI. Residues 39–344 are Lumenal-facing; sequence QEIPKAKEFM…NITVDFWFGA (306 aa). A disulfide bond links Cys-77 and Cys-118. UDP-alpha-D-galactose-binding positions include 129-133, 168-170, and 195-196; these read PHRNR, FNR, and VD. A disulfide bond links Cys-189 and Cys-208. Asp-196 is a binding site for Mn(2+). Asn-220 is a glycosylation site (N-linked (GlcNAc...) asparagine). Residues Tyr-224 and Trp-256 each coordinate UDP-alpha-D-galactose. 258-261 contributes to the N-acetyl-D-glucosamine binding site; it reads GEDD. His-289 contacts Mn(2+). 289-291 contacts UDP-alpha-D-galactose; it reads HTR. Arg-301 contributes to the N-acetyl-D-glucosamine binding site. N-linked (GlcNAc...) asparagine glycosylation is present at Asn-335.

The protein belongs to the glycosyltransferase 7 family. In terms of assembly, interacts with SLC35A2 (isoform 2; UGT1). It depends on Mn(2+) as a cofactor. Post-translationally, N-glycosylated. In terms of tissue distribution, highest expression is observed in placenta, pancreas, kidney and heart. Expressed in corneal epithelial cells.

It localises to the golgi apparatus membrane. It is found in the secreted. It carries out the reaction N-acetyl-D-glucosamine + UDP-alpha-D-galactose = beta-D-galactosyl-(1-&gt;4)-N-acetyl-D-glucosamine + UDP + H(+). It catalyses the reaction a beta-D-GlcNAc-(1-&gt;3)-beta-D-Gal-(1-&gt;4)-beta-D-Glc-(1&lt;-&gt;1)-Cer(d18:1(4E)) + UDP-alpha-D-galactose = a neolactoside nLc4Cer(d18:1(4E)) + UDP + H(+). The catalysed reaction is 3-O-{beta-D-galactosyl-(1-&gt;3)-[6-O-sulfo-N-acetyl-beta-D-glucosaminyl-(1-&gt;6)]-N-acetyl-alpha-D-galactosaminyl}-L-seryl-[protein] + UDP-alpha-D-galactose = 3-O-{beta-D-galactosyl-(1-&gt;3)-[beta-D-galactosyl-(1-&gt;4)-6-O-sulfo-N-acetyl-beta-D-glucosaminyl-(1-&gt;6)]-N-acetyl-alpha-D-galactosaminyl}-L-seryl-[protein] + UDP + H(+). The enzyme catalyses 3-O-{beta-D-galactosyl-(1-&gt;3)-[6-O-sulfo-N-acetyl-beta-D-glucosaminyl-(1-&gt;6)]-N-acetyl-alpha-D-galactosaminyl}-L-threonyl-[protein] + UDP-alpha-D-galactose = 3-O-{beta-D-galactosyl-(1-&gt;3)-[beta-D-galactosyl-(1-&gt;4)-6-O-sulfo-N-acetyl-beta-D-glucosaminyl-(1-&gt;6)]-N-acetyl-alpha-D-galactosaminyl}-L-threonyl-[protein] + UDP + H(+). It participates in protein modification; protein glycosylation. Its pathway is glycolipid biosynthesis. With respect to regulation, up-regulated by LALBA. In terms of biological role, galactose (Gal) transferase involved in the synthesis of terminal N-acetyllactosamine (LacNac) unit present on glycan chains of glycoproteins and glycosphingolipids. Catalyzes the transfer of Gal residue via a beta1-&gt;4 linkage from UDP-Gal to the non-reducing terminal N-acetyl glucosamine 6-O-sulfate (6-O-sulfoGlcNAc) in the linearly growing chain of both N- and O-linked keratan sulfate proteoglycans. Cooperates with B3GNT7 N-acetyl glucosamine transferase and CHST6 and CHST1 sulfotransferases to construct and elongate mono- and disulfated disaccharide units [-&gt;3Galbeta1-&gt;4(6-sulfoGlcNAcbeta)1-&gt;] and [-&gt;3(6-sulfoGalbeta)1-&gt;4(6-sulfoGlcNAcbeta)1-&gt;] within keratan sulfate polymer. Transfers Gal residue via a beta1-&gt;4 linkage to terminal 6-O-sulfoGlcNAc within the LacNac unit of core 2 O-glycans forming 6-sulfo-sialyl-Lewis X (sLex). May contribute to the generation of sLex epitope on mucin-type glycoproteins that serve as ligands for SELL/L-selectin, a major regulator of leukocyte migration. In the biosynthesis pathway of neolacto-series glycosphingolipids, transfers Gal residue via a beta1-&gt;4 linkage to terminal GlcNAc of a lactotriaosylceramide (Lc3Cer) acceptor to form a neolactotetraosylceramide. This chain is Beta-1,4-galactosyltransferase 4, found in Homo sapiens (Human).